The following is a 278-amino-acid chain: Gamma carbonic anhydrase 2, mitochondrial (278 aa).

The N-terminal 43 residues, 1–43 (MGTLGRAIYTVGNWIRGTGQALDRVGSLLQGSHRIEEHLSRHR), are a transit peptide targeting the mitochondrion. Substrate contacts are provided by residues 86–88 (RGD) and 101–102 (QD). Zn(2+) contacts are provided by histidine 107, histidine 130, and histidine 135. Residue asparagine 209 participates in substrate binding.

It belongs to the gamma-class carbonic anhydrase family. As to quaternary structure, homotrimer. Component of the mitochondrial oxidoreductase respiratory chain complex I; element of the extra matrix-exposed domain, which is attached to the membrane arm of this complex. Interacts with GAMMACAL1 and GAMMACAL2. Zn(2+) serves as cofactor. Constitutively expressed in roots and leaves, with higher levels in flowers, particularly in tapetal tissue of anthers, inflorescence (IM) and floral meristems (FM).

It is found in the mitochondrion membrane. Its function is as follows. Enzyme involved in the catabolism of H(2)CO(3) but that does not mediates the reversible hydration of carbon dioxide. Mediates complex I assembly in mitochondria and respiration. Binds HCO(3)-. Required for male fertility during anther development and dehiscence to regulate the secondary thickenings of the endothecial cell wall, probably by modulating H(2)O(2)-dependent lignin polymerization. The sequence is that of Gamma carbonic anhydrase 2, mitochondrial (GAMMACA2) from Arabidopsis thaliana (Mouse-ear cress).